We begin with the raw amino-acid sequence, 2243 residues long: Zinc finger FYVE domain-containing protein 26 homolog (2243 aa).

Disordered stretches follow at residues 386 to 416 and 514 to 556; these read SQRKGEDGENDEEDDEQYVDDDVASPPRPTA and KKKA…GKAS. Over residues 393–408 the composition is skewed to acidic residues; sequence GENDEEDDEQYVDDDV. At Tyr403 the chain carries Phosphotyrosine. The segment covering 517–528 has biased composition (basic and acidic residues); the sequence is ASSDDESRERSN. Over residues 534-543 the composition is skewed to basic residues; it reads NRRKARRQRR. One copy of the LRR 1 repeat lies at 617-644; sequence KKIIETFHLEHSQLNRELHFMEQQQLVK. The residue at position 1424 (Ser1424) is a Phosphoserine. An FYVE-type zinc finger spans residues 1444–1500; that stretch reads DEEASHCMCCRRAAFTMLMRRHHCRRCGRVVCYACSTHRIRIPELYDELEVRICNDC. Residues Cys1450, Cys1453, Cys1467, Cys1470, Cys1475, Cys1478, Cys1497, and Cys1500 each coordinate Zn(2+). The segment at 1505-1534 is disordered; that stretch reads TPAKDQGDGTSSERSAISGQVSKSSGRSDS. Positions 1512 to 1534 are enriched in polar residues; that stretch reads DGTSSERSAISGQVSKSSGRSDS. An LRR 2 repeat occupies 1887–1912; that stretch reads YPQLANGGLNVLMDELQQLDDAQFTA.

It belongs to the ZFYVE26 family.

Phosphatidylinositol 3-phosphate (PtdIns[3]P)-binding protein. Involved in autophagy. The chain is Zinc finger FYVE domain-containing protein 26 homolog from Drosophila melanogaster (Fruit fly).